The chain runs to 339 residues: DNA-directed RNA polymerase subunit alpha (339 aa).

The interval methionine 1–glutamate 233 is alpha N-terminal domain (alpha-NTD). The interval lysine 267–lysine 339 is alpha C-terminal domain (alpha-CTD).

It belongs to the RNA polymerase alpha chain family. In terms of assembly, in plastids the minimal PEP RNA polymerase catalytic core is composed of four subunits: alpha, beta, beta', and beta''. When a (nuclear-encoded) sigma factor is associated with the core the holoenzyme is formed, which can initiate transcription.

The protein localises to the plastid. The protein resides in the chloroplast. It catalyses the reaction RNA(n) + a ribonucleoside 5'-triphosphate = RNA(n+1) + diphosphate. Its function is as follows. DNA-dependent RNA polymerase catalyzes the transcription of DNA into RNA using the four ribonucleoside triphosphates as substrates. The chain is DNA-directed RNA polymerase subunit alpha from Piper cenocladum (Ant piper).